The primary structure comprises 161 residues: Small ribosomal subunit protein uS8m (161 aa).

The protein belongs to the universal ribosomal protein uS8 family. In terms of assembly, component of the mitochondrial small ribosomal subunit (mt-SSU). Mature N.crassa 74S mitochondrial ribosomes consist of a small (37S) and a large (54S) subunit. The 37S small subunit contains a 16S ribosomal RNA (16S mt-rRNA) and 32 different proteins. The 54S large subunit contains a 23S rRNA (23S mt-rRNA) and 42 different proteins.

The protein resides in the mitochondrion. In terms of biological role, component of the mitochondrial ribosome (mitoribosome), a dedicated translation machinery responsible for the synthesis of mitochondrial genome-encoded proteins, including at least some of the essential transmembrane subunits of the mitochondrial respiratory chain. The mitoribosomes are attached to the mitochondrial inner membrane and translation products are cotranslationally integrated into the membrane. The polypeptide is Small ribosomal subunit protein uS8m (mrps8) (Neurospora crassa (strain ATCC 24698 / 74-OR23-1A / CBS 708.71 / DSM 1257 / FGSC 987)).